A 264-amino-acid polypeptide reads, in one-letter code: Small ribosomal subunit protein eS1 (264 aa).

Positions 236–255 are enriched in basic and acidic residues; the sequence is GEGGSGKRGEAGDKSERPEG. Residues 236–264 form a disordered region; it reads GEGGSGKRGEAGDKSERPEGYEPPVQESV.

It belongs to the eukaryotic ribosomal protein eS1 family. Component of the small ribosomal subunit. Mature ribosomes consist of a small (40S) and a large (60S) subunit. The 40S subunit contains about 33 different proteins and 1 molecule of RNA (18S). The 60S subunit contains about 49 different proteins and 3 molecules of RNA (28S, 5.8S and 5S).

The protein localises to the cytoplasm. In Spodoptera frugiperda (Fall armyworm), this protein is Small ribosomal subunit protein eS1.